Reading from the N-terminus, the 519-residue chain is GTPase Der (519 aa).

Composition is skewed to acidic residues over residues 1–12 (MDVEGAFADEEE) and 30–54 (GYED…PDFG). The disordered stretch occupies residues 1–54 (MDVEGAFADEEELAPHGGWASADFDPAEFGYEDSDDDFDAEDFDETEFSNPDFG). 2 consecutive EngA-type G domains span residues 81-244 (CTVA…PEEP) and 254-427 (RRVA…DNWD). Residues 87 to 94 (GRPNVGKS), 134 to 138 (DTGGW), 196 to 199 (NKFD), 260 to 267 (GKPNVGKS), 307 to 311 (DTAGL), and 372 to 375 (NKWD) each bind GTP. The 83-residue stretch at 428–510 (RRISTGQLNT…PVRIAVRVRE (83 aa)) folds into the KH-like domain.

The protein belongs to the TRAFAC class TrmE-Era-EngA-EngB-Septin-like GTPase superfamily. EngA (Der) GTPase family. As to quaternary structure, associates with the 50S ribosomal subunit.

Its function is as follows. GTPase that plays an essential role in the late steps of ribosome biogenesis. In Corynebacterium glutamicum (strain ATCC 13032 / DSM 20300 / JCM 1318 / BCRC 11384 / CCUG 27702 / LMG 3730 / NBRC 12168 / NCIMB 10025 / NRRL B-2784 / 534), this protein is GTPase Der.